Here is a 130-residue protein sequence, read N- to C-terminus: uncharacterized protein (130 aa).

Residues 1-19 form the signal peptide; sequence MKVLGNILWWAFVGFMAYA.

This is an uncharacterized protein from Escherichia coli (strain K12).